The chain runs to 207 residues: LexA repressor (207 aa).

A DNA-binding region (H-T-H motif) is located at residues Arg-28–Lys-48. Catalysis depends on for autocatalytic cleavage activity residues Ser-126 and Lys-163.

This sequence belongs to the peptidase S24 family. In terms of assembly, homodimer.

The catalysed reaction is Hydrolysis of Ala-|-Gly bond in repressor LexA.. Its function is as follows. Represses a number of genes involved in the response to DNA damage (SOS response), including recA and lexA. In the presence of single-stranded DNA, RecA interacts with LexA causing an autocatalytic cleavage which disrupts the DNA-binding part of LexA, leading to derepression of the SOS regulon and eventually DNA repair. The polypeptide is LexA repressor (Marinomonas sp. (strain MWYL1)).